The following is a 257-amino-acid chain: Imidazole glycerol phosphate synthase subunit HisF (257 aa).

Catalysis depends on residues D11 and D130.

It belongs to the HisA/HisF family. In terms of assembly, heterodimer of HisH and HisF.

It is found in the cytoplasm. It carries out the reaction 5-[(5-phospho-1-deoxy-D-ribulos-1-ylimino)methylamino]-1-(5-phospho-beta-D-ribosyl)imidazole-4-carboxamide + L-glutamine = D-erythro-1-(imidazol-4-yl)glycerol 3-phosphate + 5-amino-1-(5-phospho-beta-D-ribosyl)imidazole-4-carboxamide + L-glutamate + H(+). It functions in the pathway amino-acid biosynthesis; L-histidine biosynthesis; L-histidine from 5-phospho-alpha-D-ribose 1-diphosphate: step 5/9. In terms of biological role, IGPS catalyzes the conversion of PRFAR and glutamine to IGP, AICAR and glutamate. The HisF subunit catalyzes the cyclization activity that produces IGP and AICAR from PRFAR using the ammonia provided by the HisH subunit. This is Imidazole glycerol phosphate synthase subunit HisF from Prochlorococcus marinus (strain MIT 9515).